The primary structure comprises 78 residues: Conotoxin Cal6.3a (78 aa).

The signal sequence occupies residues 1–21; that stretch reads MRFLHFLIVAVLLASFMESGA. A propeptide spanning residues 22–26 is cleaved from the precursor; that stretch reads MPRNP. 3 cysteine pairs are disulfide-bonded: Cys-38/Cys-49, Cys-41/Cys-53, and Cys-48/Cys-56. Gln-76 carries the post-translational modification Glutamine amide.

In terms of tissue distribution, expressed by the venom duct.

The protein localises to the secreted. In terms of biological role, probable neurotoxin with unknown target. Possibly targets ion channels. The polypeptide is Conotoxin Cal6.3a (Californiconus californicus (California cone)).